The chain runs to 404 residues: Deoxyguanosinetriphosphate triphosphohydrolase-like protein (404 aa).

A disordered region spans residues 1–33 (MSVGMAAPRAAYGCDPDRSRGRQFAEPPSNNRS). One can recognise an HD domain in the interval 69-217 (RLTHSLEVAQ…AAIADDIAYD (149 aa)).

It belongs to the dGTPase family. Type 2 subfamily.

The chain is Deoxyguanosinetriphosphate triphosphohydrolase-like protein from Rhodopseudomonas palustris (strain BisB5).